Here is a 61-residue protein sequence, read N- to C-terminus: Alpha-conotoxin-like Sm1.1 (61 aa).

The N-terminal stretch at 1 to 16 is a signal peptide; it reads MFTVFLLVVLATTVVS. A propeptide spanning residues 17 to 43 is cleaved from the precursor; that stretch reads FPSDRASDGRDDEAKDERSDMHESGRK. Residues 19 to 46 are disordered; it reads SDRASDGRDDEAKDERSDMHESGRKGRG. Residues 21–42 show a composition bias toward basic and acidic residues; that stretch reads RASDGRDDEAKDERSDMHESGR. Cystine bridges form between Cys-48–Cys-53 and Cys-49–Cys-59. The residue at position 55 (Pro-55) is a 4-hydroxyproline; partial. A Cysteine amide modification is found at Cys-59.

This sequence belongs to the conotoxin A superfamily. In terms of tissue distribution, expressed by the venom duct.

It localises to the secreted. Functionally, alpha-conotoxins act on postsynaptic membranes, they bind to the nicotinic acetylcholine receptors (nAChR) and thus inhibit them. The protein is Alpha-conotoxin-like Sm1.1 of Conus stercusmuscarum (Fly-specked cone).